The following is a 241-amino-acid chain: B9 domain-containing protein 1 (241 aa).

The disordered stretch occupies residues 1–42 (MSASEGISLPGNEETTPPHEKHKQKAKKAKKKSRSAKESVPN). The segment covering 20–34 (EKHKQKAKKAKKKSR) has biased composition (basic residues). Residues 53-197 (FSLSIVGQIV…TSWLLRREPE (145 aa)) form the C2 B9-type domain.

It belongs to the B9D family. As to quaternary structure, probable component of the tectonic-like complex (also named MKS complex), composed of B9d1, B9d2, Cc2d2a, Mks1 and tctn. As to expression, expressed in type I sensory neurons (at protein level). Expressed in spermatids and spermatocytes (at protein level).

It is found in the cytoplasm. The protein resides in the cytoskeleton. The protein localises to the cilium basal body. In terms of biological role, probable component of the tectonic-like complex (also named MKS complex), a complex localized at the transition zone of primary cilia. Required for ciliary structure and function. This Drosophila melanogaster (Fruit fly) protein is B9 domain-containing protein 1.